The sequence spans 852 residues: Disease resistance RPP13-like protein 4 (852 aa).

The stretch at 17-68 (LEEKGRTVSDYRKQLEDLQSELKYMQSFLKDAERQKRTNETLRTLVADLREL) forms a coiled coil. ADP is bound by residues Arg-149, Val-161, 189 to 196 (GMGGLGKT), Arg-297, and Lys-363. An NB-ARC domain is found at 164–410 (EGDKRKIKEW…MSSLQLSYDE (247 aa)). LRR repeat units follow at residues 558–581 (CKYL…ILDE), 585–609 (LQHL…MEDL), 633–657 (FKKL…IGSL), 683–706 (LTNL…ELDS), 763–786 (LPML…FWGN), and 798–824 (LSSL…VTAN).

This sequence belongs to the disease resistance NB-LRR family. RPP13 subfamily. As to quaternary structure, interacts with ZED1/ZRK5. Component of a stable high-order oligomeric complex made of RKS1 and RPP13L4/ZAR1 which recruits ZED1-related kinases (e.g. uridylylated PBL2 and acetylated ZED1/ZRK5) in the presence of ATP and pathogenic bacteria type III secreted effector (T3SE) proteins (e.g. Pseudomonas syringae HopZ1a and HopF2a and Xanthomonas campestris pv. campestris (Xcc) XopAC/AvrAC) to form a wheel-like pentameric resistosome; this complex triggers immunity toward pathogenic bacteria (e.g. X.campestris and P.syringae), especially in vascular tissues. Interacts with RKS1, ZED1/ZRK5, ZRK3, ZRK6 and ZRK15.

The protein localises to the cell membrane. Its subcellular location is the nucleus. With respect to regulation, exhibits autoinhibition activity. Its function is as follows. CC-NB-LRR receptor-like protein required for recognition of pathogenic bacteria type III effectors (T3E) such as Pseudomonas syringae HopZ1a and HopF2a and Xanthomonas campestris pv. campestris (Xcc) XopAC/AvrAC; this recognition requires ZED1-related kinases (e.g. PBL2, ZRK3 and ZED1/ZRK5). Confers allele-specific recognition and virulence attenuation of HopZ1a. Immunity mediated by RPP13L4/ZAR1 is independent of several genes required by other resistance protein signaling pathways such as NDR1 and RAR1. Together with ZED1/ZRK5, involved in the regulation of the ambient temperature-sensitive intersection of growth and immune response in the absence of pathogens. The chain is Disease resistance RPP13-like protein 4 (RPP13L4) from Arabidopsis thaliana (Mouse-ear cress).